Reading from the N-terminus, the 1272-residue chain is Ubiquitin carboxyl-terminal hydrolase 2 (1272 aa).

Positions 736 to 1258 (TGINNIGNTC…TPYFLVYVKQ (523 aa)) constitute a USP domain. Cys745 functions as the Nucleophile in the catalytic mechanism. Positions 884-918 (DGLNGDVGTDANRKKNESNDAEVSENEDTTGLTSP) are disordered. The span at 902 to 911 (NDAEVSENED) shows a compositional bias: acidic residues. Phosphoserine is present on Ser907. The Proton acceptor role is filled by His1209.

This sequence belongs to the peptidase C19 family. In terms of assembly, forms a ternary complex with RSP5 and RUP1. Interacts with RSP5. Interacts with FZO1.

The enzyme catalyses Thiol-dependent hydrolysis of ester, thioester, amide, peptide and isopeptide bonds formed by the C-terminal Gly of ubiquitin (a 76-residue protein attached to proteins as an intracellular targeting signal).. Functionally, has an ATP-independent isopeptidase activity, cleaving at the C-terminus of the ubiquitin moiety in natural or engineered linear fusion proteins, irrespective of their size or the presence of an N-terminal extension to ubiquitin. Hydrolyzes polyubiquitinated 'Lys-63' polyubiquitin chains in RPO21, producing mono-ubiquitinated RNA polymerase II. Removes ubiquitin chains that initiate proteolysis of FZO1 and inhibit mitochondrial fusion. The chain is Ubiquitin carboxyl-terminal hydrolase 2 (UBP2) from Saccharomyces cerevisiae (strain ATCC 204508 / S288c) (Baker's yeast).